We begin with the raw amino-acid sequence, 156 residues long: MGKQVEIFTDGSCLGNPGPGGYGVLLRYQQHEKTLSEGFYRTTNNRMELMAAIIGLETLTRPCKIVLTTDSQYVRQGITQWIHNWKKRGWRKADKSPVSNVDLWQRLDQAISRHDIDWQWVKGHSGHNENEHCDELARAAANSPTETDTGYLENRD.

One can recognise an RNase H type-1 domain in the interval Met1–Asn142. Asp10, Glu48, Asp70, and Asp134 together coordinate Mg(2+).

The protein belongs to the RNase H family. As to quaternary structure, monomer. The cofactor is Mg(2+).

The protein resides in the cytoplasm. The enzyme catalyses Endonucleolytic cleavage to 5'-phosphomonoester.. In terms of biological role, endonuclease that specifically degrades the RNA of RNA-DNA hybrids. The polypeptide is Ribonuclease H (Photorhabdus luminescens (Xenorhabdus luminescens)).